We begin with the raw amino-acid sequence, 70 residues long: Large ribosomal subunit protein bL31 (70 aa).

This sequence belongs to the bacterial ribosomal protein bL31 family. Type A subfamily. As to quaternary structure, part of the 50S ribosomal subunit.

Functionally, binds the 23S rRNA. The protein is Large ribosomal subunit protein bL31 of Mycoplasma mobile (strain ATCC 43663 / 163K / NCTC 11711) (Mesomycoplasma mobile).